A 229-amino-acid polypeptide reads, in one-letter code: Molybdenum transport system permease protein ModB (229 aa).

The Periplasmic segment spans residues 1-16; that stretch reads MILTDPEWQAVLLSLK. Residues 11-219 form the ABC transmembrane type-1 domain; the sequence is VLLSLKVSSL…MISLLISEWL (209 aa). Residues 17–37 form a helical membrane-spanning segment; the sequence is VSSLAVLFSLPFGIFFAWLLV. Topologically, residues 38-49 are cytoplasmic; that stretch reads RCTFPGKALLDS. A helical transmembrane segment spans residues 50–70; the sequence is VLHLPLVLPPVVVGYLLLVSM. The Periplasmic segment spans residues 71–83; it reads GRRGFIGERLYDW. A helical transmembrane segment spans residues 84-104; that stretch reads FGITFAFSWRGAVLAAAVMSF. At 105 to 136 the chain is on the cytoplasmic side; it reads PLMVRAIRLALEGVDVKLEQAARTLGAGRWRV. Residues 137–157 traverse the membrane as a helical segment; it reads FFTITLPLTLPGIIVGTVLAF. The Periplasmic segment spans residues 158–201; it reads ARSLGEFGATITFVSNIPGETRTIPSAMYTLIQTPGGESGAARL. The chain crosses the membrane as a helical span at residues 202–222; the sequence is CIISIALAMISLLISEWLARI. The Cytoplasmic portion of the chain corresponds to 223–229; that stretch reads SRERAGR.

This sequence belongs to the binding-protein-dependent transport system permease family. CysTW subfamily.

It is found in the cell inner membrane. Its function is as follows. Part of the binding-protein-dependent transport system for molybdenum; probably responsible for the translocation of the substrate across the membrane. The polypeptide is Molybdenum transport system permease protein ModB (modB) (Escherichia coli O157:H7).